Here is a 1787-residue protein sequence, read N- to C-terminus: Chromodomain-helicase-DNA-binding protein 3 homolog (1787 aa).

Disordered regions lie at residues 1 to 80 (MSDD…PDPY) and 170 to 258 (PVTP…KEQG). The segment covering 10 to 43 (DGDETMEEDSMLAEGHEDGEEDVGEDEEEVETEE) has biased composition (acidic residues). Basic residues predominate over residues 56–71 (PPPKKKKGGKKSSKKK). A compositionally biased stretch (basic and acidic residues) spans 192–243 (DGSDGEGGGHDSDQEFEALIKQHEKQQDEAEKGKEEARINRAAAKVDKRKAA). 2 consecutive PHD-type zinc fingers follow at residues 265 to 312 (QENC…CEEH) and 328 to 375 (MDYC…CIIP). Chromo domains are found at residues 373 to 476 (IIPE…STLS) and 501 to 583 (MQIH…GPKE). Residues 628-812 (RHCWSNGTDA…FHLLNFLAPD (185 aa)) enclose the Helicase ATP-binding domain. 641–648 (DEMGLGKT) contacts ATP. The DEAH box signature appears at 763–766 (DEAH). One can recognise a Helicase C-terminal domain in the interval 944–1107 (LLQKMLRKLK…GKSMSKTELD (164 aa)). Disordered regions lie at residues 1120 to 1141 (EEEA…PNEQ), 1186 to 1212 (TKEA…QDPN), 1248 to 1295 (ENMG…EERS), and 1754 to 1787 (RASS…YPRY). Positions 1190 to 1199 (DDADDDEDET) are enriched in acidic residues. Residues 1248 to 1261 (ENMGQDWSAQNNQQ) show a composition bias toward polar residues. Over residues 1761 to 1773 (TKDEPMDTSDKDI) the composition is skewed to basic and acidic residues.

It belongs to the SNF2/RAD54 helicase family. Expressed in the head and vulva.

It is found in the nucleus. The enzyme catalyses ATP + H2O = ADP + phosphate + H(+). Its function is as follows. ATP-dependent chromatin-remodeling factor that has a role in notch signaling-dependent vulval cell fate determination. May also have a role in pharyngeal precursor cell specification. In Caenorhabditis elegans, this protein is Chromodomain-helicase-DNA-binding protein 3 homolog (chd-3).